Here is a 400-residue protein sequence, read N- to C-terminus: Cytoplasmic polyadenylated homeobox-like protein 2 (400 aa).

Positions Met1–His29 are disordered. The segment covering Glu9–Gln18 has biased composition (basic and acidic residues). Residues Thr19 to His29 show a composition bias toward basic residues. Residues Lys24–Glu83 constitute a DNA-binding region (homeobox).

The protein resides in the nucleus. The chain is Cytoplasmic polyadenylated homeobox-like protein 2 from Homo sapiens (Human).